Here is a 476-residue protein sequence, read N- to C-terminus: Glutamate--tRNA ligase (476 aa).

Residues 8 to 18 (PSPTGTLHIGT) carry the 'HIGH' region motif. A 'KMSKS' region motif is present at residues 247 to 251 (KLSKR). K250 is a binding site for ATP.

It belongs to the class-I aminoacyl-tRNA synthetase family. Glutamate--tRNA ligase type 1 subfamily. In terms of assembly, monomer.

It localises to the cytoplasm. The catalysed reaction is tRNA(Glu) + L-glutamate + ATP = L-glutamyl-tRNA(Glu) + AMP + diphosphate. Its function is as follows. Catalyzes the attachment of glutamate to tRNA(Glu) in a two-step reaction: glutamate is first activated by ATP to form Glu-AMP and then transferred to the acceptor end of tRNA(Glu). The chain is Glutamate--tRNA ligase from Synechococcus sp. (strain WH7803).